Consider the following 456-residue polypeptide: Bifunctional protein GlmU (456 aa).

The pyrophosphorylase stretch occupies residues 1 to 229 (MLNSAMSVVI…LSEVEGVNNR (229 aa)). Residues 11 to 14 (LAAG), K25, Q76, 81 to 82 (GT), 103 to 105 (YGD), G140, E154, N169, and N227 contribute to the UDP-N-acetyl-alpha-D-glucosamine site. D105 provides a ligand contact to Mg(2+). Residue N227 participates in Mg(2+) binding. Positions 230 to 250 (LQLSRLERVYQSEQAEKLLLA) are linker. The N-acetyltransferase stretch occupies residues 251–456 (GVMLRDPARF…QGWQRPAKKK (206 aa)). R333 and K351 together coordinate UDP-N-acetyl-alpha-D-glucosamine. H363 serves as the catalytic Proton acceptor. Residues Y366 and N377 each contribute to the UDP-N-acetyl-alpha-D-glucosamine site. Residues A380, 386–387 (NY), S405, A423, and R440 contribute to the acetyl-CoA site.

It in the N-terminal section; belongs to the N-acetylglucosamine-1-phosphate uridyltransferase family. In the C-terminal section; belongs to the transferase hexapeptide repeat family. As to quaternary structure, homotrimer. The cofactor is Mg(2+).

It localises to the cytoplasm. The enzyme catalyses alpha-D-glucosamine 1-phosphate + acetyl-CoA = N-acetyl-alpha-D-glucosamine 1-phosphate + CoA + H(+). It catalyses the reaction N-acetyl-alpha-D-glucosamine 1-phosphate + UTP + H(+) = UDP-N-acetyl-alpha-D-glucosamine + diphosphate. It functions in the pathway nucleotide-sugar biosynthesis; UDP-N-acetyl-alpha-D-glucosamine biosynthesis; N-acetyl-alpha-D-glucosamine 1-phosphate from alpha-D-glucosamine 6-phosphate (route II): step 2/2. It participates in nucleotide-sugar biosynthesis; UDP-N-acetyl-alpha-D-glucosamine biosynthesis; UDP-N-acetyl-alpha-D-glucosamine from N-acetyl-alpha-D-glucosamine 1-phosphate: step 1/1. Its pathway is bacterial outer membrane biogenesis; LPS lipid A biosynthesis. Functionally, catalyzes the last two sequential reactions in the de novo biosynthetic pathway for UDP-N-acetylglucosamine (UDP-GlcNAc). The C-terminal domain catalyzes the transfer of acetyl group from acetyl coenzyme A to glucosamine-1-phosphate (GlcN-1-P) to produce N-acetylglucosamine-1-phosphate (GlcNAc-1-P), which is converted into UDP-GlcNAc by the transfer of uridine 5-monophosphate (from uridine 5-triphosphate), a reaction catalyzed by the N-terminal domain. The sequence is that of Bifunctional protein GlmU from Citrobacter koseri (strain ATCC BAA-895 / CDC 4225-83 / SGSC4696).